The chain runs to 251 residues: Lactose phosphotransferase system repressor (251 aa).

Residues 3–58 (KHERLDEIAKLVNKKGTIRTNEIVEGLNVSDMTVRRDLIELENKGILTKIHGGARS) enclose the HTH deoR-type domain. The segment at residues 20–39 (IRTNEIVEGLNVSDMTVRRD) is a DNA-binding region (H-T-H motif).

Its function is as follows. Repressor of the lactose catabolism operon. Galactose-6-phosphate is the inducer. This chain is Lactose phosphotransferase system repressor (lacR), found in Staphylococcus aureus (strain N315).